The chain runs to 141 residues: Nucleoside diphosphate kinase (141 aa).

ATP contacts are provided by Lys11, Phe59, Arg87, Thr93, Arg104, and Asn114. His117 functions as the Pros-phosphohistidine intermediate in the catalytic mechanism.

It belongs to the NDK family. Homotetramer. It depends on Mg(2+) as a cofactor.

Its subcellular location is the cytoplasm. The catalysed reaction is a 2'-deoxyribonucleoside 5'-diphosphate + ATP = a 2'-deoxyribonucleoside 5'-triphosphate + ADP. It carries out the reaction a ribonucleoside 5'-diphosphate + ATP = a ribonucleoside 5'-triphosphate + ADP. Functionally, major role in the synthesis of nucleoside triphosphates other than ATP. The ATP gamma phosphate is transferred to the NDP beta phosphate via a ping-pong mechanism, using a phosphorylated active-site intermediate. In Ralstonia nicotianae (strain ATCC BAA-1114 / GMI1000) (Ralstonia solanacearum), this protein is Nucleoside diphosphate kinase.